Reading from the N-terminus, the 100-residue chain is Small ribosomal subunit protein uS14c (100 aa).

It belongs to the universal ribosomal protein uS14 family. As to quaternary structure, part of the 30S ribosomal subunit.

It localises to the plastid. Its subcellular location is the chloroplast. Functionally, binds 16S rRNA, required for the assembly of 30S particles. In Rhodomonas salina (Cryptomonas salina), this protein is Small ribosomal subunit protein uS14c.